The primary structure comprises 140 residues: Acyl-coenzyme A thioesterase 13 (140 aa).

Methionine 1 bears the N-acetylmethionine mark. 3 positions are modified to N6-acetyllysine: lysine 27, lysine 37, and lysine 43. Position 46 (glutamate 46) interacts with CoA. Positions 50 and 81 each coordinate substrate. CoA contacts are provided by residues serine 83, tyrosine 90–lysine 95, and lysine 108–leucine 113. Lysine 108 and lysine 127 each carry N6-acetyllysine. Histidine 137 serves as a coordination point for CoA.

It belongs to the thioesterase PaaI family. As to quaternary structure, homotetramer. Interacts with PCTP. In terms of tissue distribution, highly expressed in the kidney and moderately in the heart, liver, brain, small and large intestine. Also expressed in brown adipose tissue.

The protein resides in the cytoplasm. It is found in the cytosol. Its subcellular location is the mitochondrion. It localises to the nucleus. The protein localises to the cytoskeleton. The protein resides in the spindle. It carries out the reaction a fatty acyl-CoA + H2O = a fatty acid + CoA + H(+). It catalyses the reaction decanoyl-CoA + H2O = decanoate + CoA + H(+). The catalysed reaction is octanoyl-CoA + H2O = octanoate + CoA + H(+). The enzyme catalyses butanoyl-CoA + H2O = butanoate + CoA + H(+). It carries out the reaction hexanoyl-CoA + H2O = hexanoate + CoA + H(+). It catalyses the reaction tetradecanoyl-CoA + H2O = tetradecanoate + CoA + H(+). The catalysed reaction is hexadecanoyl-CoA + H2O = hexadecanoate + CoA + H(+). The enzyme catalyses dodecanoyl-CoA + H2O = dodecanoate + CoA + H(+). It carries out the reaction (9Z)-octadecenoyl-CoA + H2O = (9Z)-octadecenoate + CoA + H(+). In terms of biological role, catalyzes the hydrolysis of acyl-CoAs into free fatty acids and coenzyme A (CoASH), regulating their respective intracellular levels. Has acyl-CoA thioesterase activity towards medium (C12) and long-chain (C18) fatty acyl-CoA substrates. Can also hydrolyze 3-hydroxyphenylacetyl-CoA and 3,4-dihydroxyphenylacetyl-CoA (in vitro). May play a role in controlling adaptive thermogenesis. This is Acyl-coenzyme A thioesterase 13 from Mus musculus (Mouse).